The following is a 469-amino-acid chain: Glutamine synthetase (469 aa).

In terms of domain architecture, GS beta-grasp spans 13–97 (NEVKFVDLRF…IRCDILEPAT (85 aa)). In terms of domain architecture, GS catalytic spans 105-469 (PRSIAKRAEE…PLEFELYYSV (365 aa)). Residues glutamate 130 and glutamate 132 each coordinate Mg(2+). An ATP-binding site is contributed by glutamate 208. Mg(2+)-binding residues include glutamate 213 and glutamate 221. Residues 265–266 (NG) and glycine 266 each bind L-glutamate. Mg(2+) is bound at residue histidine 270. ATP contacts are provided by residues 272–274 (HQS) and serine 274. Residues arginine 322, glutamate 328, and arginine 340 each contribute to the L-glutamate site. ATP-binding residues include arginine 340, arginine 345, and lysine 353. Glutamate 358 provides a ligand contact to Mg(2+). Arginine 360 is a binding site for L-glutamate. Tyrosine 398 is subject to O-AMP-tyrosine.

This sequence belongs to the glutamine synthetase family. Oligomer of 12 subunits arranged in the form of two hexameric ring. Requires Mg(2+) as cofactor.

It localises to the cytoplasm. The catalysed reaction is L-glutamate + NH4(+) + ATP = L-glutamine + ADP + phosphate + H(+). Its activity is regulated as follows. The activity of this enzyme could be controlled by adenylation under conditions of abundant glutamine. Its function is as follows. Catalyzes the ATP-dependent biosynthesis of glutamine from glutamate and ammonia. The protein is Glutamine synthetase (glnAv) of Vibrio cholerae serotype O1 (strain ATCC 39315 / El Tor Inaba N16961).